The chain runs to 195 residues: Thioredoxin reductase-like selenoprotein T (195 aa).

The first 19 residues, 1 to 19 (MRLLLLLLVAASAMVRSEA), serve as a signal peptide directing secretion. The segment at residues 46 to 49 (CVSU) is a cross-link (cysteinyl-selenocysteine (Cys-Sec)). Residue U49 is a non-standard amino acid, selenocysteine. A helical membrane pass occupies residues 85–103 (IASFLSVFKLVLIGLIIVG).

It belongs to the SelWTH family. Selenoprotein T subfamily. May contain a selenide-sulfide bond between Cys-46 and Sec-49. This bond is speculated to serve as redox-active pair. In terms of tissue distribution, ubiquitous. Highly expressed in the endocrine pancreas.

The protein resides in the endoplasmic reticulum membrane. The enzyme catalyses [thioredoxin]-dithiol + NADP(+) = [thioredoxin]-disulfide + NADPH + H(+). Its function is as follows. Selenoprotein with thioredoxin reductase-like oxidoreductase activity. Protects dopaminergic neurons against oxidative stress and cell death. Involved in ADCYAP1/PACAP-induced calcium mobilization and neuroendocrine secretion. Plays a role in fibroblast anchorage and redox regulation. In gastric smooth muscle, modulates the contraction processes through the regulation of calcium release and MYLK activation. In pancreatic islets, involved in the control of glucose homeostasis, contributes to prolonged ADCYAP1/PACAP-induced insulin secretion. The chain is Thioredoxin reductase-like selenoprotein T from Homo sapiens (Human).